The following is a 348-amino-acid chain: Lipopolysaccharide heptosyltransferase 2 (348 aa).

The protein belongs to the glycosyltransferase 9 family.

The catalysed reaction is an L-alpha-D-Hep-(1-&gt;5)-[alpha-Kdo-(2-&gt;4)]-alpha-Kdo-(2-&gt;6)-lipid A + ADP-L-glycero-beta-D-manno-heptose = an L-alpha-D-Hep-(1-&gt;3)-L-alpha-D-Hep-(1-&gt;5)-[alpha-Kdo-(2-&gt;4)]-alpha-Kdo-(2-&gt;6)-lipid A + ADP + H(+). It participates in bacterial outer membrane biogenesis; LPS core biosynthesis. Functionally, glycosyltransferase involved in the biosynthesis of the core oligosaccharide region of lipopolysaccharide (LPS). Catalyzes the addition of the second heptose unit to the heptosyl-Kdo2-lipid A module. This is Lipopolysaccharide heptosyltransferase 2 from Salmonella typhimurium (strain LT2 / SGSC1412 / ATCC 700720).